A 704-amino-acid polypeptide reads, in one-letter code: MAAAAPAVDGVPGRGPPGEVIHLNVGGKRFSTSRQTLTWIPDSFFSSLLSGRISTLKDETGAIFIDRDPTVFAPILNFLRTKELDPRGVHGSSLLHEAQFYGLTPLVRRLQLLEELDRSSCGNVLFTGYLPPPVFPVKRRNRHSLVGPQQAGGRPAPVRRSNTMPPNLGNAGLLGRMLDEKSPPSPSGLPEEPGMVRLVCGHHNWIAVAYTQFLVCYRLKEASGWQLVFSSPRLDWPIERLALTARVLGGALGEHDKMVAVATGSEILLWALQPEGGGSEIGVFHLGVPVEALFFVGNQLIATSHTGRIGVWNAVTKHWQVQEVQPITSYDAAGSFLLLGCNNGSIYYVDVQKFPLRMKDNDLLVSELYRDPAEDGVTALSVYLTPKTSDSGNWIEIAYGTSSGGVRVIVQHPETVGSGPQLFQTFTVHRSPVTKIMLSEKHLISVCADSNHVRTWSVTRFRGMISTQPGSTPLASFKILALESADGHGGCSAGNDIGPYGERDDQQVFIQKVVPSASQLFVRLSSTGQRVCSVRSVDGSPTTAFTVLECEGSRRLGSRPRRYLLTGQANGSLAMWDLTTAMDGLGQAPAGGLTEEELMEQLEQCDLAPLASSRGSLPSPSPRTSLTSLHSAFSNTSLSSRRGSPSPPQAEARRRGGGSFVERCQELVRSGPEPRRPPTPAPRPSSGLGAPLVPPKTKLNETSF.

The residue at position 2 (alanine 2) is an N-acetylalanine. In terms of domain architecture, BTB spans glutamate 19–glycine 88. A disordered region spans residues leucine 145–proline 165. Position 163 is a phosphothreonine (threonine 163). 5 WD repeats span residues arginine 233–glutamate 280, valine 283–glutamine 322, valine 324–lysine 359, valine 428–serine 466, and leucine 548–glycine 586. A compositionally biased stretch (low complexity) spans alanine 611 to serine 644. The tract at residues alanine 611 to phenylalanine 704 is disordered. The PXXXPR motif lies at proline 618–arginine 623. Residues serine 644 and serine 646 each carry the phosphoserine modification. The PXXXPR signature appears at proline 678–arginine 683.

Belongs to the KCTD3 family. Monomer. Interacts with CUL3; interaction is direct and forms a 5:5 heterodecamer. Interacts (via PXXXPR motifs) with SH3KBP1 (via SH3 domains). Directly interacts with cathepsin B/CTSB.

The protein resides in the lysosome. Inhibits CBL-SH3KBP1 complex mediated down-regulation of EGFR signaling by sequestration of SH3KBP1. Binds to SH3KBP1 and prevents its interaction with CBL and inhibits translocation of SH3KBP1 to EGFR containing vesicles upon EGF stimulation. The chain is SH3KBP1-binding protein 1 (SHKBP1) from Bos taurus (Bovine).